The chain runs to 200 residues: Inner membrane-spanning protein YciB (200 aa).

The next 5 membrane-spanning stretches (helical) occupy residues 32-52, 56-76, 93-113, 126-146, and 153-173; these read FVATGAFMVAIVAAVIVSYVV, VPLMALVTAVIVLVFGGLTLV, LFAVTLYVGLMLGRSFIAILF, FLTIRWARFFLFMAVLNEVIW, and FWVAFKAFGVIPLTAVFAMTQ.

This sequence belongs to the YciB family.

It is found in the cell inner membrane. Its function is as follows. Plays a role in cell envelope biogenesis, maintenance of cell envelope integrity and membrane homeostasis. This is Inner membrane-spanning protein YciB from Afipia carboxidovorans (strain ATCC 49405 / DSM 1227 / KCTC 32145 / OM5) (Oligotropha carboxidovorans).